A 485-amino-acid polypeptide reads, in one-letter code: Glutamyl-tRNA(Gln) amidotransferase subunit A (485 aa).

Residues lysine 78 and serine 153 each act as charge relay system in the active site. Catalysis depends on serine 177, which acts as the Acyl-ester intermediate.

It belongs to the amidase family. GatA subfamily. In terms of assembly, heterotrimer of A, B and C subunits.

The catalysed reaction is L-glutamyl-tRNA(Gln) + L-glutamine + ATP + H2O = L-glutaminyl-tRNA(Gln) + L-glutamate + ADP + phosphate + H(+). Functionally, allows the formation of correctly charged Gln-tRNA(Gln) through the transamidation of misacylated Glu-tRNA(Gln) in organisms which lack glutaminyl-tRNA synthetase. The reaction takes place in the presence of glutamine and ATP through an activated gamma-phospho-Glu-tRNA(Gln). The chain is Glutamyl-tRNA(Gln) amidotransferase subunit A from Lawsonia intracellularis (strain PHE/MN1-00).